The chain runs to 460 residues: Signal recognition particle 54 kDa protein (460 aa).

Residues 104-111 (GLQGSGKT), 184-188 (DTAGR), and 242-245 (TKLD) each bind GTP.

It belongs to the GTP-binding SRP family. SRP54 subfamily. Part of the signal recognition particle protein translocation system, which is composed of SRP and FtsY. Archaeal SRP consists of a 7S RNA molecule of 300 nucleotides and two protein subunits: SRP54 and SRP19.

It is found in the cytoplasm. It catalyses the reaction GTP + H2O = GDP + phosphate + H(+). Its function is as follows. Involved in targeting and insertion of nascent membrane proteins into the cytoplasmic membrane. Binds to the hydrophobic signal sequence of the ribosome-nascent chain (RNC) as it emerges from the ribosomes. The SRP-RNC complex is then targeted to the cytoplasmic membrane where it interacts with the SRP receptor FtsY. The polypeptide is Signal recognition particle 54 kDa protein (Halobacterium salinarum (strain ATCC 29341 / DSM 671 / R1)).